The primary structure comprises 295 residues: Ribosomal protein L11 methyltransferase (295 aa).

S-adenosyl-L-methionine is bound by residues Thr145, Gly166, Asp188, and Asn230.

This sequence belongs to the methyltransferase superfamily. PrmA family.

The protein localises to the cytoplasm. It carries out the reaction L-lysyl-[protein] + 3 S-adenosyl-L-methionine = N(6),N(6),N(6)-trimethyl-L-lysyl-[protein] + 3 S-adenosyl-L-homocysteine + 3 H(+). Methylates ribosomal protein L11. The protein is Ribosomal protein L11 methyltransferase of Pectobacterium atrosepticum (strain SCRI 1043 / ATCC BAA-672) (Erwinia carotovora subsp. atroseptica).